The sequence spans 545 residues: MTTLTQSTTWKALQTHSSQLPHMRELFAQNPQRFEQMSVAACGLFLDYSKNRVNDETLKLLFSLAKEAKLSEKITAMFNGDVINNTEQRSVLHTALRSKATQTIIAEGANIVPEVQQTLAKMAKFVGSVQSGEWKGYTGKAITDIVSIGIGGSFLGPKIVSQALRPYWQEGLNCHFVANVDATSICEKLKNLNAETTLFVMSSKSFSTQETLTNTLSAKDWFLGQGASQQDVAKHFVAVTSNVTKATEFGMDANNIFPMWDWVGGRYSLWSAIGLPIALLVGMDNFTALLDGAHQMDQHFADTPIEQNMPVIMAMLSVLYGNFHGAQSHVILTYDHYLRGLPAYFQQLDMESNGKSVTLDGTDVDYSTGPVIWGGEGTNGQHAYHQLLHQGTALIPADFIMPLQSHNPLGEHHDQLASNCFGQTQALMQGRTYDEALAELSNSKLDEQQKPLIAKHKVMVGNKPSNTLLMDKLTPTTLGALIALYEHRTFVQGAIWQINSFDQWGVELGKQLGNDVLERIGADHDATDLDGSSNALVNLYRKGKL.

Glu-351 (proton donor) is an active-site residue. Catalysis depends on residues His-382 and Lys-510.

Belongs to the GPI family.

The protein resides in the cytoplasm. The catalysed reaction is alpha-D-glucose 6-phosphate = beta-D-fructose 6-phosphate. It functions in the pathway carbohydrate biosynthesis; gluconeogenesis. It participates in carbohydrate degradation; glycolysis; D-glyceraldehyde 3-phosphate and glycerone phosphate from D-glucose: step 2/4. In terms of biological role, catalyzes the reversible isomerization of glucose-6-phosphate to fructose-6-phosphate. This is Glucose-6-phosphate isomerase from Shewanella frigidimarina (strain NCIMB 400).